Reading from the N-terminus, the 282-residue chain is Pantothenate synthetase (282 aa).

30–37 (MGNLHDGH) lines the ATP pocket. The active-site Proton donor is the His37. A (R)-pantoate-binding site is contributed by Gln61. Gln61 is a beta-alanine binding site. 149-152 (GNKD) provides a ligand contact to ATP. Gln155 serves as a coordination point for (R)-pantoate. ATP-binding positions include Ala178 and 186–189 (MSSR).

This sequence belongs to the pantothenate synthetase family. Homodimer.

The protein resides in the cytoplasm. The enzyme catalyses (R)-pantoate + beta-alanine + ATP = (R)-pantothenate + AMP + diphosphate + H(+). The protein operates within cofactor biosynthesis; (R)-pantothenate biosynthesis; (R)-pantothenate from (R)-pantoate and beta-alanine: step 1/1. Functionally, catalyzes the condensation of pantoate with beta-alanine in an ATP-dependent reaction via a pantoyl-adenylate intermediate. This is Pantothenate synthetase from Marinomonas sp. (strain MWYL1).